The sequence spans 675 residues: Transmembrane protein 232 (675 aa).

Residues 163–183 (LVKIGYLIFLRLFVFFLHGHL) traverse the membrane as a helical segment. Positions 598-634 (WQKDMEARKREEEAYKAQNQKDKEEKEKIHFQEIMKQ) form a coiled coil. Residues 605–624 (RKREEEAYKAQNQKDKEEKE) form a disordered region.

In terms of tissue distribution, high expression in the testis and weak expression levels in the spleen, liver, brain, uterus, lung, epididymis and kidney. Not detected in the heart or ovary.

The protein resides in the membrane. Plays a critical role for male fertility and sperm motility by regulating sperm cytoplasm removal and maintaining axoneme integrity. This is Transmembrane protein 232 (Tmem232) from Mus musculus (Mouse).